We begin with the raw amino-acid sequence, 122 residues long: Large ribosomal subunit protein uL14 (122 aa).

It belongs to the universal ribosomal protein uL14 family. Part of the 50S ribosomal subunit. Forms a cluster with proteins L3 and L19. In the 70S ribosome, L14 and L19 interact and together make contacts with the 16S rRNA in bridges B5 and B8.

Functionally, binds to 23S rRNA. Forms part of two intersubunit bridges in the 70S ribosome. The sequence is that of Large ribosomal subunit protein uL14 from Maricaulis maris (strain MCS10) (Caulobacter maris).